A 1447-amino-acid polypeptide reads, in one-letter code: MENSLGCVWVPKLAFVLFGASLLSAHLQVTGFQIKPFTSLHFVSEPSDAVTMRGGNVLLNCSAESDRGVPVIKWKKDGLILALGMDDRKQQLPNGSLLIQNILHSRHHKPDEGLYQCEASLADSGSIISRTAKVTVAGPLRFLSQTESITAFMGDTVLLKCEVIGEPMPTIHWQKNQQDLNPLPGDSRVVVLPSGALQISRLQPGDSGVYRCSARNPASIRTGNEAEVRILSDPGLHRQLYFLQRPSNVIAIEGKDAVLECCVSGYPPPSFTWLRGEEVIQLRSKKYSLLGGSNLLISNVTDDDSGTYTCVVTYKNENISASAELTVLVPPWFLNHPSNLYAYESMDIEFECAVSGKPVPTVNWMKNGDVVIPSDYFQIVGGSNLRILGVVKSDEGFYQCVAENEAGNAQSSAQLIVPKPAIPSSSILPSAPRDVLPVLVSSRFVRLSWRPPAEAKGNIQTFTVFFSREGDNRERALNTTQPGSLQLTVGNLKPEAMYTFRVVAYNEWGPGESSQPIKVATQPELQVPGPVENLHAVSTSPTSILITWEPPAYANGPVQGYRLFCTEVSTGKEQNIEVDGLSYKLEGLKKFTEYTLRFLAYNRYGPGVSTDDITVVTLSDVPSAPPQNISLEVVNSRSIKVSWLPPPSGTQNGFITGYKIRHRKTTRRGEMETLEPNNLWYLFTGLEKGSQYSFQVSAMTVNGTGPPSNWYTAETPENDLDESQVPDQPSSLHVRPQTNCIIMSWTPPLNPNIVVRGYIIGYGVGSPYAETVRVDSKQRYYSIERLESSSHYVISLKAFNNAGEGVPLYESATTRSITDPTDPVDYYPLLDDFPTSGPDVSTPMLPPVGVQAVALTHEAVRVSWADNSVPKNQKTSDVRLYTVRWRTSFSASAKYKSEDTTSLSYTATGLKPNTMYEFSVMVTKNRRSSTWSMTAHATTYEAAPTSAPKDLTVITREGKPRAVIVSWQPPLEANGKITAYILFYTLDKNIPIDDWIMETISGDRLTHQIMDLSLDTMYYFRIQARNVKGVGPLSDPILFRTLKVEHPDKMANDQGRHGDGGYWPVDTNLIDRSTLNEPPIGQMHPPHGSVTPQKNSNLLVITVVTVGVLTVLVVVIVAVICTRRSSAQQRKKRATHSVSKRKGSQKDLRPPDLWIHHEEMEMKNIEKPTGTDPAGRDSPIQSCQDLTPVSHSQSETQMGSKSASHSGQDTEDAGSSMSTLERSLAARRATRAKLMIPMEAQSSNPAVVSAIPVPTLESAQYPGILPSPTCGYPHPQFTLRPVPFPTLSVDRGFGAGRTQSVSEGPTTQQQPMLPPAQPEHPSSEEAPSRTIPTACVRPTHPLRSFANPLLPPPMSAIEPKVPYTPLLSQPGPTLPKTHVKTASLGLAGKARSPLLPVSVPTAPEVSEESHKPTEDPASVYEQDDLSEQMASLEGLMKQLNAITGSAF.

An N-terminal signal peptide occupies residues 1-25 (MENSLGCVWVPKLAFVLFGASLLSA). Residues 26-1097 (HLQVTGFQIK…GSVTPQKNSN (1072 aa)) are Extracellular-facing. 4 consecutive Ig-like C2-type domains span residues 36-135 (PFTS…AKVT), 139-229 (PLRF…AEVR), 234-326 (PGLH…AELT), and 331-416 (PWFL…AQLI). 2 N-linked (GlcNAc...) asparagine glycosylation sites follow: Asn-60 and Asn-94. 3 disulfide bridges follow: Cys-61–Cys-117, Cys-161–Cys-212, and Cys-261–Cys-310. Asn-299 and Asn-318 each carry an N-linked (GlcNAc...) asparagine glycan. Cys-352 and Cys-400 are disulfide-bonded. 6 consecutive Fibronectin type-III domains span residues 431–524 (APRD…TQPE), 530–620 (PVEN…TLSD), 625–718 (PPQN…TPEN), 728–821 (QPSS…TDPT), 846–942 (PPVG…TYEA), and 947–1044 (APKD…TLKV). The N-linked (GlcNAc...) asparagine glycan is linked to Asn-478. 2 N-linked (GlcNAc...) asparagine glycosylation sites follow: Asn-628 and Asn-702. The helical transmembrane segment at 1098 to 1122 (LLVITVVTVGVLTVLVVVIVAVICT) threads the bilayer. Residues 1123-1447 (RRSSAQQRKK…QLNAITGSAF (325 aa)) lie on the Cytoplasmic side of the membrane. Disordered stretches follow at residues 1126-1153 (SAQQ…PPDL) and 1166-1220 (EKPT…MSTL). Residues 1129–1143 (QRKKRATHSVSKRKG) show a composition bias toward basic residues. The span at 1144 to 1153 (SQKDLRPPDL) shows a compositional bias: basic and acidic residues. Residue Ser-1178 is modified to Phosphoserine; by MAPK1. Positions 1179–1220 (PIQSCQDLTPVSHSQSETQMGSKSASHSGQDTEDAGSSMSTL) are enriched in polar residues. Thr-1187 is subject to Phosphothreonine; by MAPK1. At Ser-1267 the chain carries Phosphoserine; by MAPK1. Disordered stretches follow at residues 1291–1329 (RGFG…APSR) and 1394–1419 (LLPV…PASV). Residues 1297 to 1311 (RTQSVSEGPTTQQQP) are compositionally biased toward polar residues.

The protein belongs to the immunoglobulin superfamily. DCC family. In terms of assembly, interacts with the cytoplasmic part of UNC5A, UNC5B, UNC5C and probably UNC5D. Interacts with MAPK1. Interacts with NTN1. Interacts with DSCAM. Interacts with PTK2/FAK1. Interacts with MYO10. Interacts with CBLN4; this interaction can be competed by NTN1. Interacts with SIAH1 and SIAH2. In terms of processing, ubiquitinated; mediated by SIAH1 or SIAH2 and leading to its subsequent proteasomal degradation. In the embryo, expressed at high levels in the developing brain and neural tube. In the embryo, expressed in developing neurons of the telencephalic cortical plate and in developing brainstem nuclei. In adult, highly expressed in brain with very low levels found in testis, heart and thymus. Isoform C is expressed only in the embryo.

It localises to the membrane. Functionally, receptor for netrin required for axon guidance. Mediates axon attraction of neuronal growth cones in the developing nervous system upon ligand binding. Its association with UNC5 proteins may trigger signaling for axon repulsion. It also acts as a dependence receptor required for apoptosis induction when not associated with netrin ligand. Implicated as a tumor suppressor gene. This chain is Netrin receptor DCC (Dcc), found in Mus musculus (Mouse).